The sequence spans 66 residues: Large ribosomal subunit protein bL31 (66 aa).

Zn(2+) is bound by residues cysteine 16, cysteine 18, cysteine 36, and cysteine 39.

The protein belongs to the bacterial ribosomal protein bL31 family. Type A subfamily. As to quaternary structure, part of the 50S ribosomal subunit during exponential growth. Zn(2+) serves as cofactor.

Functionally, binds the 23S rRNA. While neither of the L31 paralogs is essential, this protein seems to function as the main L31 protein. Has a lower affinity for 70S ribosomes than the non-zinc-containing paralog L31B (ytiA); is displaced by it to varying extents, even under zinc-replete conditions. The sequence is that of Large ribosomal subunit protein bL31 (rpmE) from Bacillus subtilis (strain 168).